The chain runs to 301 residues: Mitochondrial carnitine/acylcarnitine carrier protein (301 aa).

At Ala2 the chain carries N-acetylalanine. Topologically, residues 2–12 are cytoplasmic; it reads ADQPKPISPLK. Solcar repeat units follow at residues 8–99, 108–196, and 207–293; these read ISPL…GKKL, LSYP…VKNI, and LSVP…AMKF. A helical membrane pass occupies residues 13 to 31; sequence NLLAGGFGGVCLVFVGHPL. Residues 32-73 lie on the Mitochondrial matrix side of the membrane; the sequence is DTVKVRLQTQPPSLPGQPPMYSGTFDCFRKTLFREGIRGLYR. Residues 74-93 traverse the membrane as a helical segment; it reads GMAAPIIGVTPMFAVCFFGF. Topologically, residues 94–112 are cytoplasmic; that stretch reads GLGKKLQQKHPEDVLSYPQ. Residues 113–131 form a helical membrane-spanning segment; it reads LFAAGMLSGIFTTGIMTPG. Residues 132–170 are Mitochondrial matrix-facing; the sequence is ERIKCLLQIQASSGETKYTGTLDCAKKLYQEFGIRGIYK. N6-acetyllysine occurs at positions 148 and 157. At Lys170 the chain carries N6-acetyllysine; alternate. Lys170 is subject to N6-succinyllysine; alternate. Residues 171–190 form a helical membrane-spanning segment; the sequence is GTVVTLMRDVPASGMYFMTY. The Cytoplasmic portion of the chain corresponds to 191–211; it reads EWVKNIFTPEGKRVSELSVPR. The helical transmembrane segment at 212–230 threads the bilayer; sequence VLVAGGIAGIFNWAVAIPP. At 231 to 267 the chain is on the mitochondrial matrix side; the sequence is DVLKSRFQTAPPGKYPNGFRDVLRELIPDEGVTSLYK. A helical membrane pass occupies residues 268 to 287; the sequence is GFNAVMIRAFPANAACFLGF. Over 288–301 the chain is Cytoplasmic; that stretch reads EVAMKFLNWATPNL.

The protein belongs to the mitochondrial carrier (TC 2.A.29) family.

It is found in the mitochondrion inner membrane. The enzyme catalyses O-acetyl-(R)-carnitine(in) + (R)-carnitine(out) = O-acetyl-(R)-carnitine(out) + (R)-carnitine(in). It carries out the reaction an O-acyl-(R)-carnitine(in) + (R)-carnitine(out) = an O-acyl-(R)-carnitine(out) + (R)-carnitine(in). The catalysed reaction is O-propanoyl-(R)-carnitine(in) + (R)-carnitine(out) = O-propanoyl-(R)-carnitine(out) + (R)-carnitine(in). It catalyses the reaction O-hexadecanoyl-(R)-carnitine(in) + (R)-carnitine(out) = O-hexadecanoyl-(R)-carnitine(out) + (R)-carnitine(in). The enzyme catalyses O-octanoyl-(R)-carnitine(in) + (R)-carnitine(out) = O-octanoyl-(R)-carnitine(out) + (R)-carnitine(in). It carries out the reaction (R)-carnitine(in) = (R)-carnitine(out). Its function is as follows. Mediates the electroneutral exchange of acylcarnitines (O-acyl-(R)-carnitine or L-acylcarnitine) of different acyl chain lengths (ranging from O-acetyl-(R)-carnitine to long-chain O-acyl-(R)-carnitines) with free carnitine ((R)-carnitine or L-carnitine) across the mitochondrial inner membrane, via a ping-pong mechanism. Key player in the mitochondrial oxidation pathway, it translocates the fatty acids in the form of acylcarnitines into the mitochondrial matrix, where the carnitine palmitoyltransferase 2 (CPT-2) activates them to undergo fatty acid beta-oxidation. Catalyzes the unidirectional transport (uniport) of carnitine at lower rates than the antiport (exchange). The chain is Mitochondrial carnitine/acylcarnitine carrier protein (SLC25A20) from Macaca fascicularis (Crab-eating macaque).